The primary structure comprises 463 residues: L-seryl-tRNA(Sec) selenium transferase (463 aa).

Residue Lys-295 is modified to N6-(pyridoxal phosphate)lysine.

Belongs to the SelA family. In terms of assembly, homodecamer; pentamer of dimers. Binds only one seryl-tRNA(Sec) per dimer. It depends on pyridoxal 5'-phosphate as a cofactor.

The protein resides in the cytoplasm. It catalyses the reaction L-seryl-tRNA(Sec) + selenophosphate + H(+) = L-selenocysteinyl-tRNA(Sec) + phosphate. It functions in the pathway aminoacyl-tRNA biosynthesis; selenocysteinyl-tRNA(Sec) biosynthesis; selenocysteinyl-tRNA(Sec) from L-seryl-tRNA(Sec) (bacterial route): step 1/1. Converts seryl-tRNA(Sec) to selenocysteinyl-tRNA(Sec) required for selenoprotein biosynthesis. The sequence is that of L-seryl-tRNA(Sec) selenium transferase from Salmonella paratyphi A (strain AKU_12601).